Reading from the N-terminus, the 859-residue chain is Cadherin-related family member 1 (859 aa).

The first 21 residues, 1–21, serve as a signal peptide directing secretion; it reads MRRGPRVALVLGLLRIYLAQA. Over 22-701 the chain is Extracellular; sequence NFAPHFFDNG…LIQTKDNPMK (680 aa). Cadherin domains lie at 36 to 135, 136 to 247, 248 to 354, 360 to 473, 474 to 577, and 569 to 691; these read NGNM…APRF, IQEP…APIF, VGTP…PPTF, PQNK…VPKF, TSHY…YPQF, and DVND…MAAF. 2 N-linked (GlcNAc...) asparagine glycosylation sites follow: N58 and N89. N288 is a glycosylation site (N-linked (GlcNAc...) asparagine). A helical transmembrane segment spans residues 702 to 722; sequence AVGVLAGVMAIVVAITVLIST. The Cytoplasmic portion of the chain corresponds to 723-859; it reads ATFWRNKKSN…KKSLDNKAYI (137 aa). A disordered region spans residues 793–838; that stretch reads PALPPPPKMASSMVAQQTVPTVSGSLTPQPSPQLPTPKTLGGPVQS. The span at 805-816 shows a compositional bias: polar residues; that stretch reads MVAQQTVPTVSG.

Interacts with PROM1. In terms of processing, undergoes proteolytic cleavage; produces a soluble 95 kDa N-terminal fragment and a 25 kDa cell-associated C-terminal fragment. As to expression, expressed in cone and rod photoreceptor cells (at protein level). Expressed in photoreceptor cells of the outer nuclear layer of the retina. Expressed in mitral and tufted cells in the olfactory bulb.

Its subcellular location is the cell membrane. Its function is as follows. Potential calcium-dependent cell-adhesion protein. May be required for the structural integrity of the outer segment (OS) of photoreceptor cells. In Mus musculus (Mouse), this protein is Cadherin-related family member 1 (Cdhr1).